Here is a 181-residue protein sequence, read N- to C-terminus: Large ribosomal subunit protein uL16 (181 aa).

The protein belongs to the universal ribosomal protein uL16 family.

This Pyrococcus horikoshii (strain ATCC 700860 / DSM 12428 / JCM 9974 / NBRC 100139 / OT-3) protein is Large ribosomal subunit protein uL16.